The chain runs to 124 residues: Probable 5-hydroxyisourate hydrolase (124 aa).

Substrate is bound by residues histidine 16, arginine 57, and tyrosine 121.

Belongs to the transthyretin family. 5-hydroxyisourate hydrolase subfamily. In terms of assembly, homotetramer.

It carries out the reaction 5-hydroxyisourate + H2O = 5-hydroxy-2-oxo-4-ureido-2,5-dihydro-1H-imidazole-5-carboxylate + H(+). Its function is as follows. Catalyzes the hydrolysis of 5-hydroxyisourate (HIU) to 2-oxo-4-hydroxy-4-carboxy-5-ureidoimidazoline (OHCU). In Schizosaccharomyces pombe (strain 972 / ATCC 24843) (Fission yeast), this protein is Probable 5-hydroxyisourate hydrolase.